The following is a 688-amino-acid chain: Lectin-domain containing receptor kinase VI.3 (688 aa).

A signal peptide spans 1 to 14 (MLVLFLLLTIPTRA). Topologically, residues 15–306 (QRTTTETPKT…KRGYNSQVLA (292 aa)) are extracellular. Residues 22 to 271 (PKTEFIFRGF…AHYVMGWSFS (250 aa)) are legume-lectin like. Residues 307 to 327 (LIVALSGVTVILLALLFFFVM) form a helical membrane-spanning segment. Residues 328 to 688 (YKKRLQQGEV…VSSSSVISGR (361 aa)) lie on the Cytoplasmic side of the membrane. Residues 361–640 (FKENRIVGTG…LNGDDDVPEI (280 aa)) enclose the Protein kinase domain. ATP-binding positions include 367–375 (VGTGGFGTV) and Lys-391. Catalysis depends on Asp-490, which acts as the Proton acceptor. Residues 662 to 688 (VSSDRASSSVPSFSVTRVSSSSVISGR) form a disordered region.

This sequence in the C-terminal section; belongs to the protein kinase superfamily. Ser/Thr protein kinase family. It in the N-terminal section; belongs to the leguminous lectin family.

The protein resides in the cell membrane. The enzyme catalyses L-seryl-[protein] + ATP = O-phospho-L-seryl-[protein] + ADP + H(+). It carries out the reaction L-threonyl-[protein] + ATP = O-phospho-L-threonyl-[protein] + ADP + H(+). Its function is as follows. Involved in negative regulation of abscisic acid response in seed germination. The protein is Lectin-domain containing receptor kinase VI.3 (LECRK63) of Arabidopsis thaliana (Mouse-ear cress).